We begin with the raw amino-acid sequence, 121 residues long: Natriuretic peptides B (121 aa).

The signal sequence occupies residues 1-26; the sequence is MDLLKVLSQMILFLLFLYLSPLGGHS. Residues 61 to 89 are disordered; it reads LKDQGLTKEHPKRVLRSQGSTLRVQQRPQ. The segment covering 77-89 has biased composition (polar residues); that stretch reads SQGSTLRVQQRPQ. Cys99 and Cys115 are disulfide-bonded.

The protein belongs to the natriuretic peptide family. Post-translationally, the precursor molecule is proteolytically cleaved by the endoprotease Furin to produce brain natriuretic peptide 45. May undergo further proteolytic cleavage by various proteases such as DPP4, MME and possibly FAP, to give rise to a variety of shorter peptides. May be cleaved at Ser-91 by the prolyl endopeptidase FAP (seprase) activity (in vitro). May be degraded by IDE. During IDE degradation, the resulting products initially increase the activation of NPR1 and can also stimulate NPR2 to produce cGMP before the fragments are completely degraded and inactivated by IDE (in vitro). As to expression, expressed abundantly in the ventricle, and in a lesser extent in the atrium (at protein level).

The protein localises to the secreted. Functionally, cardiac hormone that plays a key role in mediating cardio-renal homeostasis. May also function as a paracrine antifibrotic factor in the heart. Acts by specifically binding and stimulating NPR1 to produce cGMP, which in turn activates effector proteins that drive various biological responses. Likely involved in regulating the extracellular fluid volume and maintaining the fluid-electrolyte balance through natriuresis, diuresis, kaluresis and chloruresis. The polypeptide is Natriuretic peptides B (Nppb) (Mus musculus (Mouse)).